The sequence spans 114 residues: Chaperonin GroEL (114 aa).

22–26 contacts ATP; it reads DGTTT.

This sequence belongs to the chaperonin (HSP60) family. Forms a cylinder of 14 subunits composed of two heptameric rings stacked back-to-back. Interacts with the co-chaperonin GroES.

It localises to the cytoplasm. The enzyme catalyses ATP + H2O + a folded polypeptide = ADP + phosphate + an unfolded polypeptide.. In terms of biological role, together with its co-chaperonin GroES, plays an essential role in assisting protein folding. The GroEL-GroES system forms a nano-cage that allows encapsulation of the non-native substrate proteins and provides a physical environment optimized to promote and accelerate protein folding. The polypeptide is Chaperonin GroEL (Mycobacterium ulcerans).